We begin with the raw amino-acid sequence, 155 residues long: Deoxyuridine 5'-triphosphate nucleotidohydrolase (155 aa).

Substrate-binding positions include 74-76, asparagine 87, and 91-93; these read RSG and LID.

Belongs to the dUTPase family. Mg(2+) is required as a cofactor.

The catalysed reaction is dUTP + H2O = dUMP + diphosphate + H(+). Its pathway is pyrimidine metabolism; dUMP biosynthesis; dUMP from dCTP (dUTP route): step 2/2. Its function is as follows. This enzyme is involved in nucleotide metabolism: it produces dUMP, the immediate precursor of thymidine nucleotides and it decreases the intracellular concentration of dUTP so that uracil cannot be incorporated into DNA. The sequence is that of Deoxyuridine 5'-triphosphate nucleotidohydrolase from Xanthomonas oryzae pv. oryzae (strain MAFF 311018).